A 230-amino-acid polypeptide reads, in one-letter code: Protein FAM3A (230 aa).

A signal peptide spans 1 to 33 (MRLAGPLRIVALVVSVGLTWIVVSILLGGPGSG). 2 cysteine pairs are disulfide-bonded: Cys59/Cys87 and Cys65/Cys222. Positions 68 to 226 (EHLAFRVVSG…LEMEGCIPRR (159 aa)) constitute a GG-type lectin domain.

Belongs to the FAM3 family.

Its subcellular location is the secreted. This chain is Protein FAM3A (FAM3A), found in Pongo abelii (Sumatran orangutan).